The chain runs to 808 residues: ATP-dependent RNA helicase dbp4 (808 aa).

The tract at residues 1 to 20 (MAPPSVGRKSKNISKGKVDA) is disordered. The Q motif signature appears at 49–77 (KNFSELPLSGPTSSGLEASHFKTLTDVQS). The Helicase ATP-binding domain maps to 80–254 (VPLALKGKDI…RLSLKEPEYV (175 aa)). Residue 93-100 (AKTGSGKT) coordinates ATP. The short motif at 202–205 (DEAD) is the DEAD box element. The Helicase C-terminal domain occupies 280 to 439 (KLNTLFGFIR…DIKNQLQNMC (160 aa)). 3 disordered regions span residues 491 to 535 (IKFQ…KYDR), 555 to 620 (DDTP…GISK), and 654 to 795 (EEGN…EPET). Positions 519 to 535 (TEKKPKKKDEVRTKYDR) are enriched in basic and acidic residues. 2 stretches are compositionally biased toward acidic residues: residues 564–573 (GTADADEDND) and 584–605 (DNDDTSDDEDDDDDDDDDDDDV). A compositionally biased stretch (basic and acidic residues) spans 670 to 705 (FRAKGTAEEQRAKFLEEEAERVREADLLDKQTAKDK). A compositionally biased stretch (acidic residues) spans 720–739 (LDDDDEEALELVDAGDDEDP). The segment covering 767–778 (KWFEDDSDDERK) has biased composition (basic and acidic residues).

The protein belongs to the DEAD box helicase family. DDX10/DBP4 subfamily. Interacts with the U3 and U14 snoRNAs. Associates with pre-ribosomal complexes.

Its subcellular location is the nucleus. It is found in the nucleolus. The enzyme catalyses ATP + H2O = ADP + phosphate + H(+). Functionally, ATP-dependent RNA helicase required for ribosome biogenesis. Involved in the release of U14 snoRNA in pre-ribosomal complexes. Required for pre-rRNA cleavage at site A2. In Sclerotinia sclerotiorum (strain ATCC 18683 / 1980 / Ss-1) (White mold), this protein is ATP-dependent RNA helicase dbp4 (dbp4).